Consider the following 819-residue polypeptide: MNISYKWLLEYLPCTLSPQEIADTLTSIGLETGGVEEIETIRGGLRGLVIGHVLTCEEHPNSDHLHITTVDVGADAPLQIVCGAPNVAAGQKVVVATVGTTLYHGEEEFAIKKSKIRGVESFGMICSEVEIGVGSSNDGTIVLPSDAPVGMPAAEYYHVESDYCIEVDITPNRVDATSHYGVARDLAASLKRNGVPAELKLPEVNLPTDIIDSRIEVKVADATACPRYQGLVIRDITVGESPEWLRNRLQAIGLRPINNIVDITNYVLHEFGQPLHAFDLAFIKGDRVHVQTVAEGTPFVTLDGVERKLTAEDLMICDSNGDPMCVAGVFGGLHSGVTEKTTDIFLESANFNPTMVRRTARRLGLNTDSSFRFERGLDPERTDWALRRAASLILEIAGGHLGGMTDVYSNPLKPHLISLSFEKVNSVIGRTIEPEMVRSILNSLEIRISKEEDGVMTLEVPRYRTDVTRDVDVIEEIMRIYGYNQVELTGYIRASLGHETETDRRYKWQTVVSEQLVGAGFNEILNNSLTAGSYYEGLKSHPREMAVELMNPLSQELNCMRQTLLFGGLETLSHNLRRKHLSLYLFEWGKCYRFHAAKRTDETPLAAYAEDDRLGIWICGQRVHNSWAHPEEPTSVFELKAVVEQVLCRVGIETGAYTLKTADNDLYASAMEVKTRSGKLLGTFGTVSTELIKRFEIEQPVYFAELLWDALMSESARYKLEARDLPRFPEVKRDLALLLDKAVSFAEIESLARGCEKKLLRRVELFDVYEGKNLPAGKKSYAVSFFLRNDEKTLNDKQIEAIMAKIRTTLEQKLGAQLR.

One can recognise a tRNA-binding domain in the interval 42–154; sequence RGGLRGLVIG…SDAPVGMPAA (113 aa). Residues 412-488 form the B5 domain; it reads LKPHLISLSF…RIYGYNQVEL (77 aa). Mg(2+) contacts are provided by aspartate 466, aspartate 472, glutamate 475, and glutamate 476. The 94-residue stretch at 726-819 folds into the FDX-ACB domain; sequence PRFPEVKRDL…LEQKLGAQLR (94 aa).

It belongs to the phenylalanyl-tRNA synthetase beta subunit family. Type 1 subfamily. In terms of assembly, tetramer of two alpha and two beta subunits. Mg(2+) serves as cofactor.

It is found in the cytoplasm. The catalysed reaction is tRNA(Phe) + L-phenylalanine + ATP = L-phenylalanyl-tRNA(Phe) + AMP + diphosphate + H(+). The sequence is that of Phenylalanine--tRNA ligase beta subunit from Porphyromonas gingivalis (strain ATCC BAA-308 / W83).